A 162-amino-acid chain; its full sequence is ATP synthase subunit b (162 aa).

Residues Gly-16 to Leu-36 traverse the membrane as a helical segment.

The protein belongs to the ATPase B chain family. F-type ATPases have 2 components, F(1) - the catalytic core - and F(0) - the membrane proton channel. F(1) has five subunits: alpha(3), beta(3), gamma(1), delta(1), epsilon(1). F(0) has three main subunits: a(1), b(2) and c(10-14). The alpha and beta chains form an alternating ring which encloses part of the gamma chain. F(1) is attached to F(0) by a central stalk formed by the gamma and epsilon chains, while a peripheral stalk is formed by the delta and b chains.

The protein localises to the cell membrane. Functionally, f(1)F(0) ATP synthase produces ATP from ADP in the presence of a proton or sodium gradient. F-type ATPases consist of two structural domains, F(1) containing the extramembraneous catalytic core and F(0) containing the membrane proton channel, linked together by a central stalk and a peripheral stalk. During catalysis, ATP synthesis in the catalytic domain of F(1) is coupled via a rotary mechanism of the central stalk subunits to proton translocation. In terms of biological role, component of the F(0) channel, it forms part of the peripheral stalk, linking F(1) to F(0). The chain is ATP synthase subunit b from Bacillus caldotenax.